Reading from the N-terminus, the 688-residue chain is Elongation factor G (688 aa).

Residues 8–282 (EKTRNIGIIA…AIVDYLPAPC (275 aa)) enclose the tr-type G domain. GTP-binding positions include 17-24 (AHIDAGKT), 81-85 (DTPGH), and 135-138 (NKMD).

The protein belongs to the TRAFAC class translation factor GTPase superfamily. Classic translation factor GTPase family. EF-G/EF-2 subfamily.

The protein resides in the cytoplasm. In terms of biological role, catalyzes the GTP-dependent ribosomal translocation step during translation elongation. During this step, the ribosome changes from the pre-translocational (PRE) to the post-translocational (POST) state as the newly formed A-site-bound peptidyl-tRNA and P-site-bound deacylated tRNA move to the P and E sites, respectively. Catalyzes the coordinated movement of the two tRNA molecules, the mRNA and conformational changes in the ribosome. The chain is Elongation factor G from Onion yellows phytoplasma (strain OY-M).